Here is a 270-residue protein sequence, read N- to C-terminus: Protein N-terminal and lysine N-methyltransferase EFM7 (270 aa).

Residues methionine 1–lysine 45 form a disordered region. Residues tryptophan 63, glycine 89–alanine 91, aspartate 111, tryptophan 158, and serine 182 each bind S-adenosyl-L-methionine.

Belongs to the class I-like SAM-binding methyltransferase superfamily. EFM7 family.

Its subcellular location is the cytoplasm. Its function is as follows. S-adenosyl-L-methionine-dependent protein methyltransferase that trimethylates the N-terminal glycine 'Gly-2' of elongation factor 1-alpha, before also catalyzing the mono- and dimethylation of 'Lys-3'. This is Protein N-terminal and lysine N-methyltransferase EFM7 from Kluyveromyces lactis (strain ATCC 8585 / CBS 2359 / DSM 70799 / NBRC 1267 / NRRL Y-1140 / WM37) (Yeast).